A 1407-amino-acid chain; its full sequence is DNA-directed RNA polymerase subunit beta' (1407 aa).

Zn(2+) contacts are provided by cysteine 70, cysteine 72, cysteine 85, and cysteine 88. Aspartate 458, aspartate 460, and aspartate 462 together coordinate Mg(2+). Zn(2+) is bound by residues cysteine 814, cysteine 888, cysteine 895, and cysteine 898.

Belongs to the RNA polymerase beta' chain family. As to quaternary structure, the RNAP catalytic core consists of 2 alpha, 1 beta, 1 beta' and 1 omega subunit. When a sigma factor is associated with the core the holoenzyme is formed, which can initiate transcription. Requires Mg(2+) as cofactor. The cofactor is Zn(2+).

The catalysed reaction is RNA(n) + a ribonucleoside 5'-triphosphate = RNA(n+1) + diphosphate. Its function is as follows. DNA-dependent RNA polymerase catalyzes the transcription of DNA into RNA using the four ribonucleoside triphosphates as substrates. The protein is DNA-directed RNA polymerase subunit beta' of Leptothrix cholodnii (strain ATCC 51168 / LMG 8142 / SP-6) (Leptothrix discophora (strain SP-6)).